The following is a 293-amino-acid chain: Pyridoxal 5'-phosphate synthase subunit PdxS (293 aa).

Aspartate 23 serves as a coordination point for D-ribose 5-phosphate. Lysine 80 functions as the Schiff-base intermediate with D-ribose 5-phosphate in the catalytic mechanism. Glycine 152 lines the D-ribose 5-phosphate pocket. Arginine 164 is a D-glyceraldehyde 3-phosphate binding site. D-ribose 5-phosphate is bound by residues glycine 213 and 234 to 235; that span reads GS.

This sequence belongs to the PdxS/SNZ family. In the presence of PdxT, forms a dodecamer of heterodimers.

The enzyme catalyses aldehydo-D-ribose 5-phosphate + D-glyceraldehyde 3-phosphate + L-glutamine = pyridoxal 5'-phosphate + L-glutamate + phosphate + 3 H2O + H(+). It participates in cofactor biosynthesis; pyridoxal 5'-phosphate biosynthesis. Functionally, catalyzes the formation of pyridoxal 5'-phosphate from ribose 5-phosphate (RBP), glyceraldehyde 3-phosphate (G3P) and ammonia. The ammonia is provided by the PdxT subunit. Can also use ribulose 5-phosphate and dihydroxyacetone phosphate as substrates, resulting from enzyme-catalyzed isomerization of RBP and G3P, respectively. The polypeptide is Pyridoxal 5'-phosphate synthase subunit PdxS (Herpetosiphon aurantiacus (strain ATCC 23779 / DSM 785 / 114-95)).